A 579-amino-acid chain; its full sequence is Effector protein HopAB3 (579 aa).

Disordered stretches follow at residues 1 to 140 (MAGI…TGAV), 214 to 294 (VRQQ…NQVP), and 384 to 408 (PARA…PDSA). Positions 1–336 (MAGINGAGPS…LRAALERHIL (336 aa)) are host recognition; Pto interaction. Composition is skewed to low complexity over residues 23–39 (ASGG…SSNS), 89–101 (RPQE…APQA), 219–248 (ASAP…ESSS), 266–281 (NQRR…ASQR), and 384–402 (PARA…ATVS). Positions 337-579 (HRRPIPMDIA…IAKYAFRIVP (243 aa)) are E3 ubiquitin-protein ligase.

The protein belongs to the HopAB family. As to quaternary structure, interacts physically with plant cell Pto. Post-translationally, auto-ubiquitinated.

The protein localises to the secreted. Effector protein involved in gene-for-gene resistance in tomato plants. It is recognized by the host Pto resistance protein and elicits Pto and Prf-dependent hypersensitive response (HR) and programmed cell death (PCD), resulting in host immunity. In susceptible plants, acts as a virulence factor by suppressing PCD and HR-based plant immunity. This function requires its E3 ubiquitin ligase activity probably by recruiting E2 enzymes and transferring ubiquitin molecules to cellular proteins involved in regulation of PCD and targeting them for degradation. Enhances the development of disease symptoms and bacterial growth. The protein is Effector protein HopAB3 (hopAB3) of Pseudomonas syringae pv. tomato.